The sequence spans 129 residues: Glyoxalase domain-containing protein 5 homolog (129 aa).

In terms of domain architecture, VOC spans 5 to 128 (RLDHLVLTVS…DYNLIEISNY (124 aa)).

Belongs to the glyoxalase I family.

The polypeptide is Glyoxalase domain-containing protein 5 homolog (glod5) (Dictyostelium discoideum (Social amoeba)).